The following is a 126-amino-acid chain: MAQLPPEDIATMPAQKVVFNAPFDNKATYYVRIINPGTKRIGFAFKTTKPKRINMNPPNGVLGPKESVNVAISCDAFDPSSEDTKGDRVTVEWCNTPDPAAAAFKLEWFQGDGMVRRKNLPIEYNV.

Alanine 2 carries the post-translational modification N-acetylalanine. The MSP domain maps to 8–125; sequence DIATMPAQKV…RRKNLPIEYN (118 aa).

In terms of tissue distribution, sperm.

The protein resides in the cell projection. It localises to the pseudopodium. Its subcellular location is the cytoplasm. The protein localises to the cytoskeleton. Central component in molecular interactions underlying sperm crawling. Forms an extensive filament system that extends from sperm villipoda, along the leading edge of the pseudopod. This Globodera rostochiensis (Golden nematode worm) protein is Major sperm protein 1 (MSP-1).